A 114-amino-acid polypeptide reads, in one-letter code: MSIGLLCCVAFSLLWASPVNAGVTQTPKFQVLKTGQSMTLQCAQDMNHNSMYWYRQDPGMGLRLIYYSASEGTTDKGEVPNGYNVSRLNKREFSLRLESAAPSQTSVYFCASSE.

The first 21 residues, 1-21 (MSIGLLCCVAFSLLWASPVNA), serve as a signal peptide directing secretion. Residues 22–114 (GVTQTPKFQV…TSVYFCASSE (93 aa)) form the Ig-like domain. A disulfide bridge connects residues C42 and C110. Residue N84 is glycosylated (N-linked (GlcNAc...) asparagine).

Alpha-beta TR is a heterodimer composed of an alpha and beta chain; disulfide-linked. The alpha-beta TR is associated with the transmembrane signaling CD3 coreceptor proteins to form the TR-CD3 (TcR or TCR). The assembly of alpha-beta TR heterodimers with CD3 occurs in the endoplasmic reticulum where a single alpha-beta TR heterodimer associates with one CD3D-CD3E heterodimer, one CD3G-CD3E heterodimer and one CD247 homodimer forming a stable octameric structure. CD3D-CD3E and CD3G-CD3E heterodimers preferentially associate with TR alpha and TR beta chains, respectively. The association of the CD247 homodimer is the last step of TcR assembly in the endoplasmic reticulum and is required for transport to the cell surface.

Its subcellular location is the cell membrane. Functionally, v region of the variable domain of T cell receptor (TR) beta chain that participates in the antigen recognition. Alpha-beta T cell receptors are antigen specific receptors which are essential to the immune response and are present on the cell surface of T lymphocytes. Recognize peptide-major histocompatibility (MH) (pMH) complexes that are displayed by antigen presenting cells (APC), a prerequisite for efficient T cell adaptive immunity against pathogens. Binding of alpha-beta TR to pMH complex initiates TR-CD3 clustering on the cell surface and intracellular activation of LCK that phosphorylates the ITAM motifs of CD3G, CD3D, CD3E and CD247 enabling the recruitment of ZAP70. In turn ZAP70 phosphorylates LAT, which recruits numerous signaling molecules to form the LAT signalosome. The LAT signalosome propagates signal branching to three major signaling pathways, the calcium, the mitogen-activated protein kinase (MAPK) kinase and the nuclear factor NF-kappa-B (NF-kB) pathways, leading to the mobilization of transcription factors that are critical for gene expression and essential for T cell growth and differentiation. The T cell repertoire is generated in the thymus, by V-(D)-J rearrangement. This repertoire is then shaped by intrathymic selection events to generate a peripheral T cell pool of self-MH restricted, non-autoaggressive T cells. Post-thymic interaction of alpha-beta TR with the pMH complexes shapes TR structural and functional avidity. This chain is T cell receptor beta variable 6-1, found in Homo sapiens (Human).